We begin with the raw amino-acid sequence, 253 residues long: Exosome complex component Rrp4 (253 aa).

Residues 80-153 form the S1 motif domain; it reads GDIVIGIVVD…SRGPILTVQD (74 aa).

This sequence belongs to the RRP4 family. In terms of assembly, component of the archaeal exosome complex. Forms a trimer of Rrp4 and/or Csl4 subunits. The trimer associates with a hexameric ring-like arrangement composed of 3 Rrp41-Rrp42 heterodimers.

Its subcellular location is the cytoplasm. Functionally, non-catalytic component of the exosome, which is a complex involved in RNA degradation. Increases the RNA binding and the efficiency of RNA degradation. Confers strong poly(A) specificity to the exosome. The sequence is that of Exosome complex component Rrp4 from Ignisphaera aggregans (strain DSM 17230 / JCM 13409 / AQ1.S1).